The primary structure comprises 79 residues: Acyl carrier protein (79 aa).

In terms of domain architecture, Carrier spans 2–77 (SEVADKVKKI…DAVEYIEKQK (76 aa)). Position 37 is an O-(pantetheine 4'-phosphoryl)serine (Ser-37).

It belongs to the acyl carrier protein (ACP) family. 4'-phosphopantetheine is transferred from CoA to a specific serine of apo-ACP by AcpS. This modification is essential for activity because fatty acids are bound in thioester linkage to the sulfhydryl of the prosthetic group.

It localises to the cytoplasm. It functions in the pathway lipid metabolism; fatty acid biosynthesis. In terms of biological role, carrier of the growing fatty acid chain in fatty acid biosynthesis. The chain is Acyl carrier protein from Granulibacter bethesdensis (strain ATCC BAA-1260 / CGDNIH1).